The sequence spans 549 residues: Sphingosine-1-phosphate transporter SPNS2 (549 aa).

Disordered regions lie at residues 14–36 (AEEE…GAGG) and 78–97 (PGCA…PASL). 11 consecutive transmembrane segments (helical) span residues 141-161 (GLLQ…FGYL), 169-189 (VILS…SFIP), 202-222 (LVGI…GDLF), 229-249 (LMLS…YITG), 261-281 (WALR…LILV), 320-340 (LATS…PLYL), 364-384 (LIFG…GAGA), 398-418 (LVCA…FVAA), 422-442 (IVGA…NWAI), 466-486 (TSHL…SDLI), and 507-527 (LCPF…LFFL).

The protein belongs to the major facilitator superfamily. Spinster (TC 2.A.1.49) family. Expression is high in the lungs and liver, low in the lymph nodes, spleen and bone marrow, and very low but detectable in the thymus. Not expressed in red blood cells. Also expressed in the inner ear: expressed in the cochlea, both in the lateral wall and organ of Corti.

It is found in the cell membrane. The protein resides in the endosome membrane. The catalysed reaction is sphing-4-enine 1-phosphate(in) = sphing-4-enine 1-phosphate(out). It catalyses the reaction sphinganine 1-phosphate(in) = sphinganine 1-phosphate(out). In terms of biological role, lipid transporter that specifically mediates export of sphingosine-1-phosphate (sphing-4-enine 1-phosphate, S1P) and sphinganine-1-phosphate in the lymph, thereby playing a role in lymphocyte trafficking. S1P is a bioactive signaling molecule that regulates many physiological processes important for the development and for the immune system. Regulates levels of S1P and the S1P gradient that exists between the high circulating concentrations of S1P and low tissue levels that control lymphocyte trafficking. Required for the egress of T-cells from lymph nodes during an immune response by mediating S1P secretion, which generates a gradient that enables activated T-cells to access lymph. Also required for the egress of immature B-cells from the bone marrow. In contrast, it does not mediate S1P release from red blood cells. Involved in auditory function: S1P release in the inner ear is required for maintenance of the endocochlear potential in the cochlea. In addition to export, also able to mediate S1P import. This is Sphingosine-1-phosphate transporter SPNS2 from Mus musculus (Mouse).